The sequence spans 370 residues: Cysteine synthase 1 (370 aa).

The N-terminal 16 residues, 1 to 16 (MFRQSVRRFATAALRS), are a transit peptide targeting the mitochondrion. Lysine 73 carries the N6-(pyridoxal phosphate)lysine modification. Pyridoxal 5'-phosphate contacts are provided by residues asparagine 103, 209–213 (GTGGT), and serine 308.

Belongs to the cysteine synthase/cystathionine beta-synthase family. Pyridoxal 5'-phosphate is required as a cofactor.

The protein localises to the mitochondrion. It catalyses the reaction O-succinyl-L-serine + hydrogen sulfide = L-cysteine + succinate. The enzyme catalyses O-acetyl-L-serine + hydrogen sulfide = L-cysteine + acetate. The protein operates within amino-acid biosynthesis; L-cysteine biosynthesis; L-cysteine from L-serine: step 2/2. Its function is as follows. Catalyzes the conversion of O-succinyl-L-serine into cysteine, the last step in the cysteine biosynthesis pathway. Can also use O-acetyl-L-serine. This chain is Cysteine synthase 1, found in Emericella nidulans (strain FGSC A4 / ATCC 38163 / CBS 112.46 / NRRL 194 / M139) (Aspergillus nidulans).